A 322-amino-acid chain; its full sequence is Phosphatidylglycerol--prolipoprotein diacylglyceryl transferase (322 aa).

The next 3 helical transmembrane spans lie at 23–43 (VYPIAILMGMIISILTVAFFW), 53–73 (FFALLFIIIPSSIIGARLWFV), and 97–117 (GLSIQGGVALPAILSLVYIYF). A 1,2-diacyl-sn-glycero-3-phospho-(1'-sn-glycerol) is bound at residue Arg-143. Helical transmembrane passes span 191–211 (PLFLYESISSIIGYIIIVWII) and 250–270 (LAAMFSILIGGMMMIYFEIWA).

Belongs to the Lgt family.

The protein localises to the cell membrane. It catalyses the reaction L-cysteinyl-[prolipoprotein] + a 1,2-diacyl-sn-glycero-3-phospho-(1'-sn-glycerol) = an S-1,2-diacyl-sn-glyceryl-L-cysteinyl-[prolipoprotein] + sn-glycerol 1-phosphate + H(+). It participates in protein modification; lipoprotein biosynthesis (diacylglyceryl transfer). Functionally, catalyzes the transfer of the diacylglyceryl group from phosphatidylglycerol to the sulfhydryl group of the N-terminal cysteine of a prolipoprotein, the first step in the formation of mature lipoproteins. The protein is Phosphatidylglycerol--prolipoprotein diacylglyceryl transferase of Mycoplasmopsis pulmonis (strain UAB CTIP) (Mycoplasma pulmonis).